An 809-amino-acid chain; its full sequence is G-type lectin S-receptor-like serine/threonine-protein kinase At1g61480 (809 aa).

The first 24 residues, 1–24 (MGKKRIMFFASLLLITIFLSFSYA), serve as a signal peptide directing secretion. Residues 25–144 (GITRESPLSI…NSGRTLWESF (120 aa)) form the Bulb-type lectin domain. Topologically, residues 25-425 (GITRESPLSI…SELGGNKRNK (401 aa)) are extracellular. Asparagine 53, asparagine 88, asparagine 94, asparagine 103, asparagine 117, asparagine 134, and asparagine 236 each carry an N-linked (GlcNAc...) asparagine glycan. The EGF-like domain occupies 278 to 314 (PENSCDIYGFCGPFGICVMSVPPKCKCFKGFVPKSIE). 2 disulfide bridges follow: cysteine 282–cysteine 294 and cysteine 288–cysteine 302. 2 N-linked (GlcNAc...) asparagine glycosylation sites follow: asparagine 320 and asparagine 375. The PAN domain maps to 333–415 (CQGNTNGKTV…GEILSIRLAS (83 aa)). 2 disulfides stabilise this stretch: cysteine 368-cysteine 389 and cysteine 372-cysteine 378. The helical transmembrane segment at 426–446 (IIVASIVSLSLFVILAFAAFC) threads the bilayer. Topologically, residues 447–809 (FLRYKVKHTV…EMTQSVILGR (363 aa)) are cytoplasmic. Residues 496-781 (FSLSNKLGQG…DLTSPKQPTF (286 aa)) enclose the Protein kinase domain. Residues 502-510 (LGQGGFGSV) and lysine 524 contribute to the ATP site. 2 positions are modified to phosphoserine: serine 530 and serine 545. The caM-binding stretch occupies residues 585 to 602 (RKRLEIDWPKRFNIIEGI). Residue aspartate 621 is the Proton acceptor of the active site. Phosphoserine is present on residues serine 625 and serine 638. At threonine 655 the chain carries Phosphothreonine. Serine 698 and serine 792 each carry phosphoserine.

It belongs to the protein kinase superfamily. Ser/Thr protein kinase family.

It localises to the cell membrane. The catalysed reaction is L-seryl-[protein] + ATP = O-phospho-L-seryl-[protein] + ADP + H(+). It catalyses the reaction L-threonyl-[protein] + ATP = O-phospho-L-threonyl-[protein] + ADP + H(+). This is G-type lectin S-receptor-like serine/threonine-protein kinase At1g61480 from Arabidopsis thaliana (Mouse-ear cress).